The chain runs to 420 residues: Tubulin epsilon and delta complex protein 1 (420 aa).

Positions 276–340 (SEGGLGELES…AVQQELAALQ (65 aa)) form a coiled coil. Over residues 342-351 (SWEQSSTPGQ) the composition is skewed to polar residues. A disordered region spans residues 342-369 (SWEQSSTPGQPQRPHRLVRSKDGAPRPQ). Residues 377–409 (IRTLSAKEACLKKALHQLQRQCQQELARLAGAL) are a coiled coil.

In terms of assembly, interacts with TEDC2. Found in a complex with TEDC1, TEDC2, TUBE1 and TUBD1.

It localises to the cell projection. Its subcellular location is the cilium. It is found in the cytoplasm. The protein localises to the cytoskeleton. The protein resides in the microtubule organizing center. It localises to the centrosome. Its subcellular location is the centriole. Acts as a positive regulator of ciliary hedgehog signaling. Required for centriole stability. May play a role in counteracting perturbation of actin filaments, such as after treatment with the actin depolymerizing microbial metabolite Chivosazole F. The chain is Tubulin epsilon and delta complex protein 1 from Mus musculus (Mouse).